The primary structure comprises 87 residues: UPF0213 protein SSA_0709 (87 aa).

A GIY-YIG domain is found at 3-78 (NKAYMYVLEC…KKKTRQAKLA (76 aa)).

This sequence belongs to the UPF0213 family.

The sequence is that of UPF0213 protein SSA_0709 from Streptococcus sanguinis (strain SK36).